Reading from the N-terminus, the 421-residue chain is UDP-N-acetylglucosamine 1-carboxyvinyltransferase (421 aa).

A phosphoenolpyruvate-binding site is contributed by 22–23; the sequence is KN. Residue arginine 93 participates in UDP-N-acetyl-alpha-D-glucosamine binding. Cysteine 117 serves as the catalytic Proton donor. Cysteine 117 bears the 2-(S-cysteinyl)pyruvic acid O-phosphothioketal mark. Residues 122–126, aspartate 308, and valine 330 contribute to the UDP-N-acetyl-alpha-D-glucosamine site; that span reads RPVDL.

It belongs to the EPSP synthase family. MurA subfamily.

The protein localises to the cytoplasm. It catalyses the reaction phosphoenolpyruvate + UDP-N-acetyl-alpha-D-glucosamine = UDP-N-acetyl-3-O-(1-carboxyvinyl)-alpha-D-glucosamine + phosphate. The protein operates within cell wall biogenesis; peptidoglycan biosynthesis. Functionally, cell wall formation. Adds enolpyruvyl to UDP-N-acetylglucosamine. This Pseudomonas aeruginosa (strain LESB58) protein is UDP-N-acetylglucosamine 1-carboxyvinyltransferase.